The primary structure comprises 235 residues: MGQKVHPHGIRLGIVKPWSSTWFANTQDFADNLDGDFKVRKFLNKELMNASVSRITIERPAKSIRVTIHTARPGIVIGKKGEDVEKLRTAVAKIAGVPAQINIAEVKKPELDAKLVADSIASQLERRVMFRRAMKRAVQNAMRLGAKGIKVEVSGRLGGAEIARSEWYREGRVPLHTLRADIDYNTAEAHTTYGVIGVKVWIFKGEILGGMAAIAQQPEQQPAAPKKAPRGKGRK.

Residues 39 to 107 (VRKFLNKELM…PAQINIAEVK (69 aa)) form the KH type-2 domain.

This sequence belongs to the universal ribosomal protein uS3 family. As to quaternary structure, part of the 30S ribosomal subunit. Forms a tight complex with proteins S10 and S14.

In terms of biological role, binds the lower part of the 30S subunit head. Binds mRNA in the 70S ribosome, positioning it for translation. In Actinobacillus succinogenes (strain ATCC 55618 / DSM 22257 / CCUG 43843 / 130Z), this protein is Small ribosomal subunit protein uS3.